Consider the following 255-residue polypeptide: Imidazole glycerol phosphate synthase subunit HisF (255 aa).

Active-site residues include D11 and D130.

The protein belongs to the HisA/HisF family. Heterodimer of HisH and HisF.

The protein localises to the cytoplasm. The catalysed reaction is 5-[(5-phospho-1-deoxy-D-ribulos-1-ylimino)methylamino]-1-(5-phospho-beta-D-ribosyl)imidazole-4-carboxamide + L-glutamine = D-erythro-1-(imidazol-4-yl)glycerol 3-phosphate + 5-amino-1-(5-phospho-beta-D-ribosyl)imidazole-4-carboxamide + L-glutamate + H(+). The protein operates within amino-acid biosynthesis; L-histidine biosynthesis; L-histidine from 5-phospho-alpha-D-ribose 1-diphosphate: step 5/9. Functionally, IGPS catalyzes the conversion of PRFAR and glutamine to IGP, AICAR and glutamate. The HisF subunit catalyzes the cyclization activity that produces IGP and AICAR from PRFAR using the ammonia provided by the HisH subunit. The protein is Imidazole glycerol phosphate synthase subunit HisF of Synechococcus sp. (strain ATCC 27144 / PCC 6301 / SAUG 1402/1) (Anacystis nidulans).